The chain runs to 476 residues: Cardiolipin synthase (476 aa).

A run of 2 helical transmembrane segments spans residues 2-22 (HLFI…IIFI) and 31-51 (WAWI…YILF). PLD phosphodiesterase domains are found at residues 207–234 (INYR…GDEY) and 389–416 (EKGF…DIRS). Residues histidine 212, lysine 214, aspartate 219, histidine 394, lysine 396, and aspartate 401 contribute to the active site.

The protein belongs to the phospholipase D family. Cardiolipin synthase subfamily.

The protein localises to the cell membrane. It carries out the reaction 2 a 1,2-diacyl-sn-glycero-3-phospho-(1'-sn-glycerol) = a cardiolipin + glycerol. Functionally, catalyzes the reversible phosphatidyl group transfer from one phosphatidylglycerol molecule to another to form cardiolipin (CL) (diphosphatidylglycerol) and glycerol. This Clostridium perfringens (strain 13 / Type A) protein is Cardiolipin synthase (cls).